A 228-amino-acid chain; its full sequence is Rab-like protein 2A (228 aa).

GTP contacts are provided by residues G28–S35, D76–Q80, and N133–D136. Residues L200–S228 are disordered.

It belongs to the small GTPase superfamily. Rab family. In terms of assembly, interacts with IFT27, IFT81, IFT172, ATP6V1E1, HK1, LDHC, MAPRE1 and HSPA2. As to expression, expressed in the testis.

Its function is as follows. Plays an essential role in male fertility, sperm intra-flagellar transport, and tail assembly. Binds, in a GTP-regulated manner, to a specific set of effector proteins including key proteins involved in cilia development and function and delivers them into the growing sperm tail. This chain is Rab-like protein 2A (RABL2A), found in Homo sapiens (Human).